A 609-amino-acid polypeptide reads, in one-letter code: NURS complex subunit pir2 (609 aa).

The span at 1-25 (MSEVHQESEVEYSRWKRERSPERSQ) shows a compositional bias: basic and acidic residues. Disordered regions lie at residues 1–60 (MSEV…RASG) and 187–210 (EKPS…QLSK). Residues 27–36 (RSQSPPGEQS) are compositionally biased toward low complexity. 2 positions are modified to phosphoserine: Ser28 and Ser30. Residues 37–57 (AYHRERSPLRKRGNYYDDRTR) are compositionally biased toward basic and acidic residues. The segment covering 201–210 (LPSNDPQLSK) has biased composition (polar residues). The segment at 474-499 (YRCHVGTCAKLFLGPEFVRKHINKKH) adopts a C2H2-type zinc-finger fold.

Belongs to the ARS2 family. In terms of assembly, interacts with ccr4.

It is found in the nucleus. The sequence is that of NURS complex subunit pir2 from Schizosaccharomyces pombe (strain 972 / ATCC 24843) (Fission yeast).